A 98-amino-acid chain; its full sequence is Homeobox protein Ht-En (98 aa).

The homeobox DNA-binding region spans 3-62 (EKRPRTAFTGDQLARLKREFSENKYLTEQRRTCLAKELNLNESQIKIWFQNKRAKMKKAS). A disordered region spans residues 79-98 (NHSSSSSSSSSSSSSIFLLA). A compositionally biased stretch (low complexity) spans 81–98 (SSSSSSSSSSSSSIFLLA).

Belongs to the engrailed homeobox family. Post-translationally, phosphorylated in the Ser-rich domain.

The protein localises to the nucleus. This protein specifies the body segmentation pattern. This Helobdella triserialis (Leech) protein is Homeobox protein Ht-En (HT-EN).